The primary structure comprises 1000 residues: DENN domain-containing protein 2A (1000 aa).

Disordered stretches follow at residues 1-155 (MLEA…LRFQ), 174-328 (DGSA…RKSY), 427-464 (KLLD…LGDL), and 491-525 (KRVK…LKAH). Polar residues predominate over residues 34-43 (QLNSVPNSGP). Composition is skewed to basic and acidic residues over residues 56-70 (IKDK…KEPP), 79-117 (DGQE…DSRA), 140-155 (SQHR…LRFQ), and 221-237 (HLEV…DWKG). Composition is skewed to pro residues over residues 249–258 (PPKPFINPVP) and 288–307 (PPLP…PPPT). Positions 427–436 (KLLDTRKLSR) are enriched in basic and acidic residues. The span at 496–506 (LSQSTESNSGK) shows a compositional bias: polar residues. Residue Ser544 is modified to Phosphoserine. The uDENN domain occupies 559–708 (EYFVVVSLHK…PFPALGKTII (150 aa)). A cDENN domain is found at 730-863 (RLEHVDFESL…LQVALEHILE (134 aa)). In terms of domain architecture, dDENN spans 865 to 960 (RNDLACDQDG…QERELRRQDA (96 aa)).

Its subcellular location is the cytoplasm. The protein resides in the cytoskeleton. Guanine nucleotide exchange factor (GEF) which may activate RAB9A and RAB9B. Promotes the exchange of GDP to GTP, converting inactive GDP-bound Rab proteins into their active GTP-bound form. May play a role in late endosomes back to trans-Golgi network/TGN transport. In Mus musculus (Mouse), this protein is DENN domain-containing protein 2A (Dennd2a).